The primary structure comprises 338 residues: Phosphatidate cytidylyltransferase, mitochondrial (338 aa).

It belongs to the TAM41 family. Requires Mg(2+) as cofactor.

The protein resides in the mitochondrion inner membrane. It carries out the reaction a 1,2-diacyl-sn-glycero-3-phosphate + CTP + H(+) = a CDP-1,2-diacyl-sn-glycerol + diphosphate. Its pathway is phospholipid metabolism; CDP-diacylglycerol biosynthesis; CDP-diacylglycerol from sn-glycerol 3-phosphate: step 3/3. Functionally, catalyzes the conversion of phosphatidic acid (PA) to CDP-diacylglycerol (CDP-DAG), an essential intermediate in the synthesis of phosphatidylglycerol, cardiolipin and phosphatidylinositol. The sequence is that of Phosphatidate cytidylyltransferase, mitochondrial (tamm41) from Danio rerio (Zebrafish).